The chain runs to 142 residues: MKYLGLALISAVFLIGACQAETPSQKCEEKYKGNTDKISCLHHCKYQYYGFIDVNYNIAQSEIRKFSNVLMDYGVVDKSKKRELKKVMHECAKQVKKEARKDSHWLNCRTSINYYRCVLTSKLIGPQRFDKAIQDYDKTISV.

Residues 1–20 (MKYLGLALISAVFLIGACQA) form the signal peptide. Intrachain disulfides connect C27-C44, C40-C108, and C91-C117.

This sequence belongs to the PBP/GOBP family. In terms of tissue distribution, female salivary gland (at protein level).

The protein resides in the secreted. In terms of biological role, inhibits contact coagulation pathway activation in the host by sequestering anionic polymers, such as polyphosphate and dextran sulfate, and thus blocking interaction of protein components of the pathway with negatively charged surfaces. Inhibits dextran sulfate-mediated autoactivation of host coagulation factor XII (F12). Inhibits dextran sulfate-mediated autoactivation of host factor XI (F11). Inhibits polyphosphate-mediated activation of host F11 by thrombin (F2). May inhibit dextran sulfate-mediated bradykinin generation in host plasma. The chain is Salivary protein 15a from Phlebotomus duboscqi (Sandfly).